The sequence spans 972 residues: 116 kDa U5 small nuclear ribonucleoprotein component (972 aa).

M1 is subject to N-acetylmethionine. The tract at residues 1-53 is disordered; that stretch reads MDTDLYDEFGNYIGPELDSDEDDDELGRETKDLDEVDEDEDDDDVGDHDEDHP. Acidic residues-rich tracts occupy residues 17–26 and 34–48; these read LDSDEDDDEL and DEVD…VGDH. S19 is modified (phosphoserine). Residue K64 forms a Glycyl lysine isopeptide (Lys-Gly) (interchain with G-Cter in SUMO1); alternate linkage. K64 is covalently cross-linked (Glycyl lysine isopeptide (Lys-Gly) (interchain with G-Cter in SUMO2); alternate). Residue T86 is modified to Phosphothreonine. Residues 127-409 form the tr-type G domain; the sequence is ELIRNVTLCG…GIHLTKEELK (283 aa). Residues 136–143, 204–208, and 258–261 contribute to the GTP site; these read GHLHHGKT, DTPGH, and NKID.

It belongs to the TRAFAC class translation factor GTPase superfamily. Classic translation factor GTPase family. EF-G/EF-2 subfamily. In terms of assembly, component of the U5 snRNP and the U4/U6-U5 tri-snRNP complex, a building block of the spliceosome. The U4/U6-U5 tri-snRNP complex is composed of the U4, U6 and U5 snRNAs and at least PRPF3, PRPF4, PRPF6, PRPF8, PRPF31, SNRNP200, TXNL4A, SNRNP40, DDX23, CD2BP2, PPIH, SNU13, EFTUD2, SART1 and USP39. Component of the pre-catalytic, catalytic and post-catalytic spliceosome complexes. Component of the minor spliceosome, which splices U12-type introns. Within this complex, interacts with CRIPT. Interacts with ERBB4 and PRPF8. Interacts with PIH1D1. Interacts with RPAP3 and URI1 in a ZNHIT2-dependent manner. Interacts with NRDE2. Interacts with FAM50A. Interacts with UBL5.

The protein resides in the nucleus. In terms of biological role, required for pre-mRNA splicing as component of the spliceosome, including pre-catalytic, catalytic and post-catalytic spliceosomal complexes. Component of the U5 snRNP and the U4/U6-U5 tri-snRNP complex, a building block of the spliceosome. As a component of the minor spliceosome, involved in the splicing of U12-type introns in pre-mRNAs. The polypeptide is 116 kDa U5 small nuclear ribonucleoprotein component (EFTUD2) (Bos taurus (Bovine)).